The following is a 348-amino-acid chain: Fructose-1,6-bisphosphatase class 1 (348 aa).

Positions 104, 126, 128, and 129 each coordinate Mg(2+). Substrate-binding positions include 129–132 (DGSS), N221, Y249, and K279. Position 285 (E285) interacts with Mg(2+).

Belongs to the FBPase class 1 family. As to quaternary structure, homotetramer. It depends on Mg(2+) as a cofactor.

It is found in the cytoplasm. The enzyme catalyses beta-D-fructose 1,6-bisphosphate + H2O = beta-D-fructose 6-phosphate + phosphate. It participates in carbohydrate biosynthesis; Calvin cycle. The sequence is that of Fructose-1,6-bisphosphatase class 1 from Thermosynechococcus vestitus (strain NIES-2133 / IAM M-273 / BP-1).